The following is a 236-amino-acid chain: Small ribosomal subunit protein uS2c (236 aa).

It belongs to the universal ribosomal protein uS2 family.

The protein localises to the plastid. The protein resides in the chloroplast. This Zea mays (Maize) protein is Small ribosomal subunit protein uS2c (rps2).